Reading from the N-terminus, the 549-residue chain is MIGHLAAMLPPPSTNSPELTVSELSAALKRTLEDRFGIVRLRGEISNYRGPHSSGHAYFCLKDQNARIDAVIWKTTFMRLKVKPEEGLEVIATGKITTYAGKSSYQIVVEAIEPAGLGALMALFEARRRQLASEGLFDEERKRALPFLPAVIGVITSPTGAVIRDILHRITERFPRPVLLWPVRVQGETAAAEVSAAIEGFNALPVTGQGPLHRPDLLIVARGGGSLEDLWGFNEENVVRAAAASSIPLIAAIGHETDWTLIDYAADLRAPTPTGAAEKAVPVRADLLTSLNDLQRRHAGAAYRLLERRRSDLRALARALPQADSLLATPRQRLDRTATRLATACLRAQDQRGLVLGRLAHRLSRQAPHASLARLGQKLEAFGRGLGRACEIAQERRRQSLLHLGIRLTQNFTQGIRVERERVHGRRQKLASLDNRLRQAMSLTLSQRQARLANLAQLTRSLSYHAVLARGFALVRDETGQPLRRAADIIENHVLTLEFSDGCRQAVAGALVATDPPVDPKPTRKPVQKSSSPKPSSRKPKKSQQEDLF.

A disordered region spans residues 511 to 549 (LVATDPPVDPKPTRKPVQKSSSPKPSSRKPKKSQQEDLF).

It belongs to the XseA family. As to quaternary structure, heterooligomer composed of large and small subunits.

The protein localises to the cytoplasm. It catalyses the reaction Exonucleolytic cleavage in either 5'- to 3'- or 3'- to 5'-direction to yield nucleoside 5'-phosphates.. In terms of biological role, bidirectionally degrades single-stranded DNA into large acid-insoluble oligonucleotides, which are then degraded further into small acid-soluble oligonucleotides. This is Exodeoxyribonuclease 7 large subunit from Beijerinckia indica subsp. indica (strain ATCC 9039 / DSM 1715 / NCIMB 8712).